Reading from the N-terminus, the 165-residue chain is Cyclic pyranopterin monophosphate synthase (165 aa).

Residues 83 to 85 and 120 to 121 each bind substrate; these read FCH and ME. The active site involves D135.

This sequence belongs to the MoaC family. As to quaternary structure, homohexamer; trimer of dimers.

It catalyses the reaction (8S)-3',8-cyclo-7,8-dihydroguanosine 5'-triphosphate = cyclic pyranopterin phosphate + diphosphate. It functions in the pathway cofactor biosynthesis; molybdopterin biosynthesis. Its function is as follows. Catalyzes the conversion of (8S)-3',8-cyclo-7,8-dihydroguanosine 5'-triphosphate to cyclic pyranopterin monophosphate (cPMP). The polypeptide is Cyclic pyranopterin monophosphate synthase (Xanthomonas campestris pv. campestris (strain B100)).